The primary structure comprises 421 residues: Serine--tRNA ligase (421 aa).

L-serine is bound at residue Thr-232–Glu-234. Arg-262–Glu-264 contacts ATP. Glu-285 contacts L-serine. Glu-349–Ser-352 is a binding site for ATP. Ser-384 contributes to the L-serine binding site.

The protein belongs to the class-II aminoacyl-tRNA synthetase family. Type-1 seryl-tRNA synthetase subfamily. In terms of assembly, homodimer. The tRNA molecule binds across the dimer.

The protein resides in the cytoplasm. It carries out the reaction tRNA(Ser) + L-serine + ATP = L-seryl-tRNA(Ser) + AMP + diphosphate + H(+). The catalysed reaction is tRNA(Sec) + L-serine + ATP = L-seryl-tRNA(Sec) + AMP + diphosphate + H(+). The protein operates within aminoacyl-tRNA biosynthesis; selenocysteinyl-tRNA(Sec) biosynthesis; L-seryl-tRNA(Sec) from L-serine and tRNA(Sec): step 1/1. Functionally, catalyzes the attachment of serine to tRNA(Ser). Is also able to aminoacylate tRNA(Sec) with serine, to form the misacylated tRNA L-seryl-tRNA(Sec), which will be further converted into selenocysteinyl-tRNA(Sec). This Mycoplasma mobile (strain ATCC 43663 / 163K / NCTC 11711) (Mesomycoplasma mobile) protein is Serine--tRNA ligase.